A 185-amino-acid chain; its full sequence is UPF0149 protein PD_0802 (185 aa).

The protein belongs to the UPF0149 family.

This is UPF0149 protein PD_0802 from Xylella fastidiosa (strain Temecula1 / ATCC 700964).